The sequence spans 428 residues: Tyrosine--tRNA ligase (428 aa).

Tyr34 is an L-tyrosine binding site. Residues 39–48 (PTADSLHIGH) carry the 'HIGH' region motif. 2 residues coordinate L-tyrosine: Tyr171 and Gln175. The short motif at 236 to 240 (KFGKT) is the 'KMSKS' region element. Lys239 is an ATP binding site. One can recognise an S4 RNA-binding domain in the interval 358–424 (VGLIDLLVDA…GKKKYFLIQV (67 aa)).

This sequence belongs to the class-I aminoacyl-tRNA synthetase family. TyrS type 1 subfamily. Homodimer.

It is found in the cytoplasm. The enzyme catalyses tRNA(Tyr) + L-tyrosine + ATP = L-tyrosyl-tRNA(Tyr) + AMP + diphosphate + H(+). In terms of biological role, catalyzes the attachment of tyrosine to tRNA(Tyr) in a two-step reaction: tyrosine is first activated by ATP to form Tyr-AMP and then transferred to the acceptor end of tRNA(Tyr). In Oceanobacillus iheyensis (strain DSM 14371 / CIP 107618 / JCM 11309 / KCTC 3954 / HTE831), this protein is Tyrosine--tRNA ligase.